The following is a 242-amino-acid chain: Caffeoyl-CoA O-methyltransferase 3 (242 aa).

Substrate is bound at residue lysine 16. S-adenosyl-L-methionine is bound by residues threonine 58, glutamate 80, 82–83, serine 88, aspartate 106, and alanine 135; that span reads GV. A substrate-binding site is contributed by aspartate 158. Residue aspartate 158 coordinates a divalent metal cation. S-adenosyl-L-methionine is bound at residue aspartate 160. The a divalent metal cation site is built by aspartate 184 and asparagine 185. Asparagine 189 provides a ligand contact to substrate.

It belongs to the class I-like SAM-binding methyltransferase superfamily. Cation-dependent O-methyltransferase family. CCoAMT subfamily. It depends on Mg(2+) as a cofactor. As to expression, mostly expressed in the bottom and middle parts of the stems.

It carries out the reaction (E)-caffeoyl-CoA + S-adenosyl-L-methionine = (E)-feruloyl-CoA + S-adenosyl-L-homocysteine + H(+). It participates in aromatic compound metabolism; phenylpropanoid biosynthesis. In terms of biological role, methylates caffeoyl-CoA to feruloyl-CoA and 5-hydroxyferuloyl-CoA to sinapoyl-CoA. Plays a role in the synthesis of feruloylated polysaccharides. Involved in the reinforcement of the plant cell wall. Also involved in the responding to wounding or pathogen challenge by the increased formation of cell wall-bound ferulic acid polymers. Also methylates free caffeic and 5-hydroxyferulic acids. The sequence is that of Caffeoyl-CoA O-methyltransferase 3 (CCOAOMT3) from Nicotiana tabacum (Common tobacco).